We begin with the raw amino-acid sequence, 543 residues long: Probable bifunctional tRNA threonylcarbamoyladenosine biosynthesis protein (543 aa).

The kae1 stretch occupies residues Met1 to Trp329. 3 residues coordinate Fe cation: His112, His116, and Tyr133. L-threonylcarbamoyladenylate-binding positions include Tyr133–Gly137, Asp165, Gly178, Glu182, and Asn262. Asp290 is a Fe cation binding site. A Protein kinase domain is found at Ile342 to Leu543. ATP contacts are provided by residues Ile348–Ile356 and Lys369. Asp461 acts as the Proton acceptor; for kinase activity in catalysis.

The protein in the N-terminal section; belongs to the KAE1 / TsaD family. It in the C-terminal section; belongs to the protein kinase superfamily. Tyr protein kinase family. BUD32 subfamily. As to quaternary structure, component of the KEOPS complex that consists of Kae1, Bud32, Cgi121 and Pcc1; the whole complex dimerizes. The cofactor is Fe(2+).

The protein localises to the cytoplasm. The enzyme catalyses L-seryl-[protein] + ATP = O-phospho-L-seryl-[protein] + ADP + H(+). It carries out the reaction L-threonyl-[protein] + ATP = O-phospho-L-threonyl-[protein] + ADP + H(+). The catalysed reaction is L-threonylcarbamoyladenylate + adenosine(37) in tRNA = N(6)-L-threonylcarbamoyladenosine(37) in tRNA + AMP + H(+). Required for the formation of a threonylcarbamoyl group on adenosine at position 37 (t(6)A37) in tRNAs that read codons beginning with adenine. Is a component of the KEOPS complex that is probably involved in the transfer of the threonylcarbamoyl moiety of threonylcarbamoyl-AMP (TC-AMP) to the N6 group of A37. The Kae1 domain likely plays a direct catalytic role in this reaction. The Bud32 domain probably displays kinase activity that regulates Kae1 function. The chain is Probable bifunctional tRNA threonylcarbamoyladenosine biosynthesis protein from Methanococcus maripaludis (strain C6 / ATCC BAA-1332).